The sequence spans 217 residues: Adenylate kinase (217 aa).

10-15 contributes to the ATP binding site; it reads GAGKGT. The NMP stretch occupies residues 30–59; sequence STGDMLRAAVKAGTEMGLAAKKVMDAGGLV. AMP-binding positions include threonine 31, arginine 36, 57–59, 85–88, and glutamine 92; these read GLV and GFPR. The segment at 122-159 is LID; it reads GRRSHPASGRTYHVKFNPPKVDGVDDVTGEPLVQRDDD. Residues arginine 123 and 132–133 each bind ATP; that span reads TY. AMP contacts are provided by arginine 156 and arginine 167. Glycine 203 contacts ATP.

It belongs to the adenylate kinase family. Monomer.

It is found in the cytoplasm. It carries out the reaction AMP + ATP = 2 ADP. Its pathway is purine metabolism; AMP biosynthesis via salvage pathway; AMP from ADP: step 1/1. Functionally, catalyzes the reversible transfer of the terminal phosphate group between ATP and AMP. Plays an important role in cellular energy homeostasis and in adenine nucleotide metabolism. In Leptothrix cholodnii (strain ATCC 51168 / LMG 8142 / SP-6) (Leptothrix discophora (strain SP-6)), this protein is Adenylate kinase.